Reading from the N-terminus, the 339-residue chain is DNA-directed RNA polymerase subunit alpha (339 aa).

Positions 1–233 are alpha N-terminal domain (alpha-NTD); that stretch reads MVREEVAGST…DLFLPFLHAE (233 aa). The alpha C-terminal domain (alpha-CTD) stretch occupies residues 266–339; it reads GIPLNCIFID…MDLLKNKLSF (74 aa).

The protein belongs to the RNA polymerase alpha chain family. As to quaternary structure, in plastids the minimal PEP RNA polymerase catalytic core is composed of four subunits: alpha, beta, beta', and beta''. When a (nuclear-encoded) sigma factor is associated with the core the holoenzyme is formed, which can initiate transcription.

The protein localises to the plastid. It localises to the chloroplast. The enzyme catalyses RNA(n) + a ribonucleoside 5'-triphosphate = RNA(n+1) + diphosphate. Functionally, DNA-dependent RNA polymerase catalyzes the transcription of DNA into RNA using the four ribonucleoside triphosphates as substrates. This Agrostis stolonifera (Creeping bentgrass) protein is DNA-directed RNA polymerase subunit alpha.